We begin with the raw amino-acid sequence, 160 residues long: MPSFDIVSEIDTVELRNAVDNANRELSTRFDFRNVNASFELVEENVKVSAEGDFQLKQMRDILRGHLAKRNVDANAMDAQNPEVTGKNWHQNILFRQGIDTPTAKKLVKLIKDAKLKVQASIQGDKVRVTGKKRDDLQATIAAIREAELGQPFQFNNFRD.

This sequence belongs to the YajQ family.

In terms of biological role, nucleotide-binding protein. The polypeptide is Nucleotide-binding protein VP1617 (Vibrio parahaemolyticus serotype O3:K6 (strain RIMD 2210633)).